A 932-amino-acid chain; its full sequence is DNA mismatch repair protein MutS (932 aa).

The segment covering 1–13 (MTTDTDTDVDAGT) has biased composition (acidic residues). Positions 1–26 (MTTDTDTDVDAGTDLEPQPEGPPEKM) are disordered. ATP is bound at residue 648–655 (GPNMSGKS). Residues 865-892 (NQQNQASDDDEIARSPRGADTNTDAGIN) are disordered.

Belongs to the DNA mismatch repair MutS family.

Functionally, this protein is involved in the repair of mismatches in DNA. It is possible that it carries out the mismatch recognition step. This protein has a weak ATPase activity. This is DNA mismatch repair protein MutS from Haloquadratum walsbyi (strain DSM 16790 / HBSQ001).